The chain runs to 338 residues: MTQKKVAILGAGSWGTGLALVLADNNHQPVIWGNLDKIVNEINESHTNSHYLPDIILPTEVKATLSLDEAIDGAEIVVIAIPTNAMRIVCKQLNEALKEPTILVHVSKGIEPETNLRMSEVIEDEIDASKRKALVVLSGPSHAEEVALRHPTTLCASCKDLSAAEIVQDRFINNNLRIYTNDDVIGAEIGGALKNIIALGAGISDGLGYGDNAKAALMTRGMAEITRLGVAVGSNPQTFYGLTGIGDLIVTCTSVHSRNWRAGNMLGKGENLDEVLEKMGMVVEGVRTAKAVHGWAKKLDIDMPITESIYAILFENKDAREAVDLLMGREKKIEKESF.

Residues S13, W14, and K108 each coordinate NADPH. The sn-glycerol 3-phosphate site is built by K108, G139, and S141. NADPH is bound at residue A143. Residues K194, D247, S257, R258, and N259 each coordinate sn-glycerol 3-phosphate. K194 serves as the catalytic Proton acceptor. NADPH is bound at residue R258. Residues V282 and E284 each coordinate NADPH.

Belongs to the NAD-dependent glycerol-3-phosphate dehydrogenase family.

Its subcellular location is the cytoplasm. The enzyme catalyses sn-glycerol 3-phosphate + NAD(+) = dihydroxyacetone phosphate + NADH + H(+). The catalysed reaction is sn-glycerol 3-phosphate + NADP(+) = dihydroxyacetone phosphate + NADPH + H(+). It participates in membrane lipid metabolism; glycerophospholipid metabolism. Catalyzes the reduction of the glycolytic intermediate dihydroxyacetone phosphate (DHAP) to sn-glycerol 3-phosphate (G3P), the key precursor for phospholipid synthesis. This chain is Glycerol-3-phosphate dehydrogenase [NAD(P)+], found in Listeria monocytogenes serotype 4b (strain CLIP80459).